Reading from the N-terminus, the 140-residue chain is Large ribosomal subunit protein uL11 (140 aa).

The protein belongs to the universal ribosomal protein uL11 family. In terms of assembly, part of the ribosomal stalk of the 50S ribosomal subunit. Interacts with L10 and the large rRNA to form the base of the stalk. L10 forms an elongated spine to which L12 dimers bind in a sequential fashion forming a multimeric L10(L12)X complex. One or more lysine residues are methylated.

Its function is as follows. Forms part of the ribosomal stalk which helps the ribosome interact with GTP-bound translation factors. In Staphylococcus carnosus (strain TM300), this protein is Large ribosomal subunit protein uL11.